The following is a 145-amino-acid chain: uncharacterized protein (145 aa).

Residues 1 to 21 (MWFLVKATFWFSLVLVLLPFL) form a helical membrane-spanning segment. The disordered stretch occupies residues 109–145 (TPAESVPSAEATEKAEPAFKRMPVPEHRLDPGPASGK). A compositionally biased stretch (basic and acidic residues) spans 119 to 138 (ATEKAEPAFKRMPVPEHRLD).

It is found in the membrane. This is an uncharacterized protein from Rhizobium meliloti (strain 1021) (Ensifer meliloti).